The primary structure comprises 599 residues: Sulfite reductase [NADPH] flavoprotein alpha-component (599 aa).

The region spanning 64 to 202 is the Flavodoxin-like domain; that stretch reads ITIISASQTG…AASEWRARVV (139 aa). Residues 70 to 75, 117 to 120, and 153 to 162 contribute to the FMN site; these read SQTGNA, STQG, and LGDSSYEFFC. The FAD-binding FR-type domain maps to 234–448; that stretch reads DAPLVASLSV…IEHNDNFRLP (215 aa). FAD contacts are provided by residues T322, A356, 386–389, 404–406, Y410, and 419–422; these read RLYS, TVG, and GGAS. Residues 519 to 520, 525 to 529, and D561 each bind NADP(+); these read SR and KVYVQ. Y599 is a binding site for FAD.

This sequence belongs to the NADPH-dependent sulphite reductase flavoprotein subunit CysJ family. It in the N-terminal section; belongs to the flavodoxin family. The protein in the C-terminal section; belongs to the flavoprotein pyridine nucleotide cytochrome reductase family. Alpha(8)-beta(8). The alpha component is a flavoprotein, the beta component is a hemoprotein. The cofactor is FAD. It depends on FMN as a cofactor.

It catalyses the reaction hydrogen sulfide + 3 NADP(+) + 3 H2O = sulfite + 3 NADPH + 4 H(+). It participates in sulfur metabolism; hydrogen sulfide biosynthesis; hydrogen sulfide from sulfite (NADPH route): step 1/1. Component of the sulfite reductase complex that catalyzes the 6-electron reduction of sulfite to sulfide. This is one of several activities required for the biosynthesis of L-cysteine from sulfate. The flavoprotein component catalyzes the electron flow from NADPH -&gt; FAD -&gt; FMN to the hemoprotein component. The polypeptide is Sulfite reductase [NADPH] flavoprotein alpha-component (Shigella boydii serotype 4 (strain Sb227)).